Consider the following 406-residue polypeptide: Cysteine desulfurase (406 aa).

Lys226 carries the N6-(pyridoxal phosphate)lysine modification. Catalysis depends on Cys364, which acts as the Cysteine persulfide intermediate.

The protein belongs to the class-V pyridoxal-phosphate-dependent aminotransferase family. Csd subfamily. In terms of assembly, homodimer. Interacts with SufE and the SufBCD complex composed of SufB, SufC and SufD. The interaction with SufE is required to mediate the direct transfer of the sulfur atom from the S-sulfanylcysteine. It depends on pyridoxal 5'-phosphate as a cofactor.

Its subcellular location is the cytoplasm. The enzyme catalyses (sulfur carrier)-H + L-cysteine = (sulfur carrier)-SH + L-alanine. It carries out the reaction L-selenocysteine + AH2 = hydrogenselenide + L-alanine + A + H(+). Its pathway is cofactor biosynthesis; iron-sulfur cluster biosynthesis. Functionally, cysteine desulfurases mobilize the sulfur from L-cysteine to yield L-alanine, an essential step in sulfur metabolism for biosynthesis of a variety of sulfur-containing biomolecules. Component of the suf operon, which is activated and required under specific conditions such as oxidative stress and iron limitation. Acts as a potent selenocysteine lyase in vitro, that mobilizes selenium from L-selenocysteine. Selenocysteine lyase activity is however unsure in vivo. The polypeptide is Cysteine desulfurase (Escherichia coli (strain K12 / MC4100 / BW2952)).